Reading from the N-terminus, the 167-residue chain is Claudin domain-containing protein 2 (167 aa).

A run of 4 helical transmembrane segments spans residues 13-32 (LLNL…NYWT), 61-81 (VSAA…GIGI), 96-116 (TIVL…VYTS), and 130-150 (YFFG…FLLA).

This sequence belongs to the PMP-22/EMP/MP20 family.

It is found in the membrane. This chain is Claudin domain-containing protein 2 (Cldnd2), found in Mus musculus (Mouse).